A 265-amino-acid chain; its full sequence is Energy-coupling factor transporter ATP-binding protein EcfA1 (265 aa).

The region spanning isoleucine 2 to aspartate 236 is the ABC transporter domain. ATP is bound at residue glycine 36–serine 43.

This sequence belongs to the ABC transporter superfamily. Energy-coupling factor EcfA family. Forms a stable energy-coupling factor (ECF) transporter complex composed of 2 membrane-embedded substrate-binding proteins (S component), 2 ATP-binding proteins (A component) and 2 transmembrane proteins (T component).

It is found in the cell membrane. ATP-binding (A) component of a common energy-coupling factor (ECF) ABC-transporter complex. Unlike classic ABC transporters this ECF transporter provides the energy necessary to transport a number of different substrates. The polypeptide is Energy-coupling factor transporter ATP-binding protein EcfA1 (Mycoplasmopsis pulmonis (strain UAB CTIP) (Mycoplasma pulmonis)).